The sequence spans 430 residues: MSLMTKLGLRALVASCLIAAGGAAHAQLNVLVTGVGSTQFPIATANFANEANSPQQISTIVRQDLQRSGKFTNIDAGSAPVSEGDSVDLGAWKAKGANAFVAGSVTKLPNGQYQVRFKLYDTVNQQSLGGLELVSPEGGLRMSAHKVADYIYAKLMGGRGVFATRLSYVIKTGNRYQLQISDSDGQDAHIALSSPEPIISPAWSPDGTKVAYVSFEKKKPIVYIHDLPTGRRVVVSDQKGNNSAPAWSPDGRTLAVALSRTGNTQIFAVNADGSGLRRLTQGSSIDTEPSYSPDGQSIYFTSDRGGQPQIYKMPASGEASGGAQRVTFTGNYNTSPRVSPDGKQLAYISRTGGGFKLYIQDLQSGVATALTDTTHDESPSFAANGQYILYATQVNGRGVLAAVSTDGRTRQVLSVQGGSVREPSWGPFMQ.

A signal peptide spans 1 to 26 (MSLMTKLGLRALVASCLIAAGGAAHA).

The protein belongs to the TolB family. In terms of assembly, the Tol-Pal system is composed of five core proteins: the inner membrane proteins TolA, TolQ and TolR, the periplasmic protein TolB and the outer membrane protein Pal. They form a network linking the inner and outer membranes and the peptidoglycan layer.

The protein resides in the periplasm. Part of the Tol-Pal system, which plays a role in outer membrane invagination during cell division and is important for maintaining outer membrane integrity. In Paraburkholderia phymatum (strain DSM 17167 / CIP 108236 / LMG 21445 / STM815) (Burkholderia phymatum), this protein is Tol-Pal system protein TolB.